Reading from the N-terminus, the 121-residue chain is Urotensin-2 (121 aa).

Positions 1-19 are cleaved as a signal peptide; that stretch reads MSKLVPCLLLLGCLGLLFA. Positions 20 to 106 are excised as a propeptide; sequence LPVPDSRKEP…HLLARIKKPY (87 aa). A disulfide bond links Cys-115 and Cys-120.

It belongs to the urotensin-2 family.

It localises to the secreted. In terms of biological role, highly potent vasoconstrictor. The sequence is that of Urotensin-2 (UTS2) from Sus scrofa (Pig).